Reading from the N-terminus, the 151-residue chain is Ubiquitin-conjugating enzyme E2 W (151 aa).

Residue M1 forms a Peptide (Met-Gly) (interchain with G-Cter in ubiquitin) linkage. Residues 3 to 151 (SMQKRLQKEL…TKWWYHDDTC (149 aa)) form the UBC core domain. Catalysis depends on C91, which acts as the Glycyl thioester intermediate.

Belongs to the ubiquitin-conjugating enzyme family. As to quaternary structure, homodimer. Interacts with FANCL. Interacts with STUB1/CHIP. Autoubiquitinated at Met-1.

It is found in the nucleus. It carries out the reaction S-ubiquitinyl-[E1 ubiquitin-activating enzyme]-L-cysteine + [E2 ubiquitin-conjugating enzyme]-L-cysteine = [E1 ubiquitin-activating enzyme]-L-cysteine + S-ubiquitinyl-[E2 ubiquitin-conjugating enzyme]-L-cysteine.. The enzyme catalyses S-ubiquitinyl-[E1 ubiquitin-activating enzyme]-L-cysteine + [acceptor protein]-N-terminal-amino acid = [E1 ubiquitin-activating enzyme]-L-cysteine + N-terminal-ubiquitinyl-[acceptor protein].. Its pathway is protein modification; protein ubiquitination. In terms of biological role, accepts ubiquitin from the E1 complex and catalyzes its covalent attachment to other proteins. Specifically monoubiquitinates the N-terminus of various substrates, including ATXN3, MAPT/TAU, POLR2H/RPB8 and STUB1/CHIP, by recognizing backbone atoms of disordered N-termini. Involved in degradation of misfolded chaperone substrates by mediating monoubiquitination of STUB1/CHIP, leading to recruitment of ATXN3 to monoubiquitinated STUB1/CHIP, and restriction of the length of ubiquitin chain attached to STUB1/CHIP substrates by ATXN3. After UV irradiation, but not after mitomycin-C (MMC) treatment, acts as a specific E2 ubiquitin-conjugating enzyme for the Fanconi anemia complex by associating with E3 ubiquitin-protein ligase FANCL and catalyzing monoubiquitination of FANCD2, a key step in the DNA damage pathway. In vitro catalyzes 'Lys-11'-linked polyubiquitination. UBE2W-catalyzed ubiquitination also occurs in the presence of inactive RING/U-box type E3s, i.e. lacking the active site cysteine residues to form thioester bonds with ubiquitin, or even in the absence of E3, albeit at a slower rate. This is Ubiquitin-conjugating enzyme E2 W (Ube2w) from Mus musculus (Mouse).